A 506-amino-acid polypeptide reads, in one-letter code: Cytochrome P450 monooxygenase atr2 (506 aa).

Residues 18 to 38 form a helical membrane-spanning segment; sequence VFAGLVLASLLTTTYCIWNIF. C451 lines the heme pocket.

It belongs to the cytochrome P450 family. Requires heme as cofactor.

The protein localises to the membrane. The enzyme catalyses 4-O-demethylbarbatate + reduced [NADPH--hemoprotein reductase] + O2 = proatranorin II + oxidized [NADPH--hemoprotein reductase] + H2O + H(+). It catalyses the reaction proatranorin II + reduced [NADPH--hemoprotein reductase] + O2 = proatranorin III + oxidized [NADPH--hemoprotein reductase] + 2 H2O + H(+). The catalysed reaction is proatranorin I + reduced [NADPH--hemoprotein reductase] + O2 = proatranorin IV + oxidized [NADPH--hemoprotein reductase] + H2O + H(+). It carries out the reaction proatranorin IV + reduced [NADPH--hemoprotein reductase] + O2 = atranorin + oxidized [NADPH--hemoprotein reductase] + 2 H2O + H(+). It functions in the pathway secondary metabolite biosynthesis; terpenoid biosynthesis. In terms of biological role, cytochrome P450 monooxygenase; part of the gene cluster that mediates the biosynthesis of atranorin, a depside of polyketide origin that accumulates in the cortical or medullary layers of lichen thalli. Atr2 performs the oxidation at the C-9 position of 4-O-demethylbarbatic acid to yield proatranorin III via proatranorin II. Atr2 is also able to oxidize the atr3 product proatranorin I to produce the final compound atranorin. The first step in the pathway is performed by the non-reducing polyketide synthase atr1 that produces 4-O-demethylbarbatic acid composed of two 3-methylorsellinic acid (3MOA) moieties. The pathway continues with the actions of the cytochrome P450 monooygenase atr2 that catalizes the oxidation of c-9 and the O-methyltransferase atr3 that performs the methylation of the carboxyl group to yield atranorin, via the proatranorin II and III intermediates if atr2 acts first, or the proatranorin I intermediate if atr3 acts first. The protein is Cytochrome P450 monooxygenase atr2 of Stereocaulon alpinum (Alpine snow lichen).